A 469-amino-acid chain; its full sequence is 3-isopropylmalate dehydratase large subunit (469 aa).

Cys350, Cys410, and Cys413 together coordinate [4Fe-4S] cluster.

The protein belongs to the aconitase/IPM isomerase family. LeuC type 1 subfamily. In terms of assembly, heterodimer of LeuC and LeuD. [4Fe-4S] cluster is required as a cofactor.

It catalyses the reaction (2R,3S)-3-isopropylmalate = (2S)-2-isopropylmalate. It participates in amino-acid biosynthesis; L-leucine biosynthesis; L-leucine from 3-methyl-2-oxobutanoate: step 2/4. Catalyzes the isomerization between 2-isopropylmalate and 3-isopropylmalate, via the formation of 2-isopropylmaleate. This is 3-isopropylmalate dehydratase large subunit from Brucella abortus (strain S19).